The chain runs to 498 residues: Glutamyl-tRNA(Gln) amidotransferase subunit A (498 aa).

Catalysis depends on charge relay system residues Lys80 and Ser155. Positions 132–159 (SSTENSAYGPTRNPWDTDRVPGGSSGGS) are disordered. Ser179 acts as the Acyl-ester intermediate in catalysis.

The protein belongs to the amidase family. GatA subfamily. In terms of assembly, heterotrimer of A, B and C subunits.

It carries out the reaction L-glutamyl-tRNA(Gln) + L-glutamine + ATP + H2O = L-glutaminyl-tRNA(Gln) + L-glutamate + ADP + phosphate + H(+). Allows the formation of correctly charged Gln-tRNA(Gln) through the transamidation of misacylated Glu-tRNA(Gln) in organisms which lack glutaminyl-tRNA synthetase. The reaction takes place in the presence of glutamine and ATP through an activated gamma-phospho-Glu-tRNA(Gln). This chain is Glutamyl-tRNA(Gln) amidotransferase subunit A, found in Thermobifida fusca (strain YX).